Consider the following 472-residue polypeptide: Serralysin A (472 aa).

Residues 1–17 constitute a propeptide that is removed on maturation; it reads MEKNLSSRDDDALHSLS. His186 provides a ligand contact to Zn(2+). Residue Glu187 is part of the active site. Zn(2+) is bound by residues His190 and Tyr221. The Ca(2+) site is built by Arg258, Gly260, Thr262, Asp290, Gly292, Gly293, Thr332, Glu334, Gly339, Gly341, Asp343, Asn348, Ala350, Asn352, Gly356, Gly357, Ala358, Gly359, Asp361, Gly365, Gly366, Gly367, Gly368, Asp370, Gly374, Gly375, Gly377, Asp379, Asp388, Asp395, and Asp405. 2 Hemolysin-type calcium-binding repeats span residues 337-354 and 355-372; these read IGGS…DNIL and RGGA…ADRL.

This sequence belongs to the peptidase M10B family. Requires Ca(2+) as cofactor. Zn(2+) serves as cofactor.

Its subcellular location is the secreted. It catalyses the reaction Preferential cleavage of bonds with hydrophobic residues in P1'.. The chain is Serralysin A (prtA) from Dickeya chrysanthemi (Pectobacterium chrysanthemi).